A 215-amino-acid polypeptide reads, in one-letter code: T-complex protein 10A homolog 1 (215 aa).

Positions 1–25 are disordered; sequence MLAGQLEARDPKEGTHPEDPCPGAG. The span at 7 to 19 shows a compositional bias: basic and acidic residues; the sequence is EARDPKEGTHPED. Residues 69–110 adopt a coiled-coil conformation; the sequence is ADVHGKLRSHIDALREQNMELREKLRALQLQRWKARKKSAAS. Residues 75–96 are leucine-zipper; sequence LRSHIDALREQNMELREKLRAL. Polar residues predominate over residues 150-163; it reads ATLLGQRSSSNNSA. Residues 150-215 are disordered; the sequence is ATLLGQRSSS…TPCAERRGGV (66 aa).

This sequence belongs to the TCP10 family. In terms of assembly, self-associates (via leucine zipper). Interacts (via leucine zipper) with ZIPK/DAPK3 (via leucine zipper). Interacts with MAD4. In terms of tissue distribution, expressed in liver and testis. Expressed in the seminiferous tubules (at protein level).

It is found in the nucleus. Functionally, may be involved in transcriptional regulation. Has in vitro transcription inhibition activity. Acts as a tumor suppressor in hepatocellular carcinoma (HCC) cells. The chain is T-complex protein 10A homolog 1 (TCP10L) from Homo sapiens (Human).